Reading from the N-terminus, the 614-residue chain is Nuclear receptor subfamily 1 group D member 1 (614 aa).

Over residues 1-48 (MTTLDSNNNTGGVITYIGSSGSSPNRTSPESLYSDSSNGSFQSLTQGC) the composition is skewed to polar residues. The segment at 1 to 70 (MTTLDSNNNT…TQDPARSFGS (70 aa)) is required for phosphorylation by CSNK1E and cytoplasmic localization. The disordered stretch occupies residues 1-120 (MTTLDSNNNT…GNRVSPSKST (120 aa)). Residues 1 to 129 (MTTLDSNNNT…TSNITKLNGM (129 aa)) form a modulating region. Positions 49-285 (PTYFPPSPTG…PPRSPSPEPT (237 aa)) are crucial for activation of GJA1. Ser55 and Ser59 each carry phosphoserine; by GSK3-beta. Low complexity predominate over residues 69–103 (GSIPPSLGDDGSPSSSSSSSSSSSSSFYNGSPPGG). The segment at residues 130–206 (VLLCKVCGDV…VGMSRDAVRF (77 aa)) is a DNA-binding region (nuclear receptor). 2 NR C4-type zinc fingers span residues 133 to 153 (CKVC…CEGC) and 170 to 194 (CLKN…FKKC). N6-acetyllysine; by KAT5 occurs at positions 192 and 193. Residues 233–286 (SSQCPLETPPTQHPTPGPMGPSPPPAPAPSPLVGFSQFPQQLTPPRSPSPEPTV) form a disordered region. Positions 239 to 262 (ETPPTQHPTPGPMGPSPPPAPAPS) are enriched in pro residues. The residue at position 275 (Thr275) is a Phosphothreonine; by CDK1. Residues 285–614 (TVEDVISQVA…KLLSFRVDAQ (330 aa)) form the NR LBD domain. Position 418 (Cys418) interacts with heme. An N6-acetyllysine modification is found at Lys591. Position 602 (His602) interacts with heme.

This sequence belongs to the nuclear hormone receptor family. NR1 subfamily. As to quaternary structure, binds DNA as a monomer or a homodimer. Interacts with C1D, NR2E3, SP1 and ZNHIT1. Interacts with OPHN1 (via C-terminus). Interacts with PER2; the interaction associates PER2 to BMAL1 promoter region. Interacts with CRY1. Interacts with CCAR2. Interacts with SIAH2. Interacts with FBXW7 and CDK1. Interacts with HUWE1. Interacts with NR0B2. Interacts with NFIL3. Interacts (via domain NR LBD) with HSP90AA1 and HSP90AB1. Ubiquitinated, leading to its proteasomal degradation. Ubiquitinated by the SCF(FBXW7) complex when phosphorylated by CDK1 leading to its proteasomal degradation. Ubiquitinated by SIAH2; leading to its proteasomal degradation. Rapidly ubiquitinated in response to inflammatory triggers and sumoylation is a prerequisite to its ubiquitination. In terms of processing, sumoylated by UBE2I, desumoylated by SENP1, and sumoylation is a prerequisite to its ubiquitination. Post-translationally, phosphorylated by CSNK1E; phosphorylation enhances its cytoplasmic localization. Undergoes lysosome-mediated degradation in a time-dependent manner in the liver. As to expression, expressed in all tissues and cell lines examined. Expressed at high levels in some squamous carcinoma cell lines.

It is found in the nucleus. It localises to the cytoplasm. Its subcellular location is the cell projection. The protein resides in the dendrite. The protein localises to the dendritic spine. In terms of biological role, transcriptional repressor which coordinates circadian rhythm and metabolic pathways in a heme-dependent manner. Integral component of the complex transcription machinery that governs circadian rhythmicity and forms a critical negative limb of the circadian clock by directly repressing the expression of core clock components BMAL1, CLOCK and CRY1. Also regulates genes involved in metabolic functions, including lipid and bile acid metabolism, adipogenesis, gluconeogenesis and the macrophage inflammatory response. Acts as a receptor for heme which stimulates its interaction with the NCOR1/HDAC3 corepressor complex, enhancing transcriptional repression. Recognizes two classes of DNA response elements within the promoter of its target genes and can bind to DNA as either monomers or homodimers, depending on the nature of the response element. Binds as a monomer to a response element composed of the consensus half-site motif 5'-[A/G]GGTCA-3' preceded by an A/T-rich 5' sequence (RevRE), or as a homodimer to a direct repeat of the core motif spaced by two nucleotides (RevDR-2). Acts as a potent competitive repressor of ROR alpha (RORA) function and regulates the levels of its ligand heme by repressing the expression of PPARGC1A, a potent inducer of heme synthesis. Regulates lipid metabolism by repressing the expression of APOC3 and by influencing the activity of sterol response element binding proteins (SREBPs); represses INSIG2 which interferes with the proteolytic activation of SREBPs which in turn govern the rhythmic expression of enzymes with key functions in sterol and fatty acid synthesis. Regulates gluconeogenesis via repression of G6PC1 and PEPCK and adipocyte differentiation via repression of PPARG. Regulates glucagon release in pancreatic alpha-cells via the AMPK-NAMPT-SIRT1 pathway and the proliferation, glucose-induced insulin secretion and expression of key lipogenic genes in pancreatic-beta cells. Positively regulates bile acid synthesis by increasing hepatic expression of CYP7A1 via repression of NR0B2 and NFIL3 which are negative regulators of CYP7A1. Modulates skeletal muscle oxidative capacity by regulating mitochondrial biogenesis and autophagy; controls mitochondrial biogenesis and respiration by interfering with the STK11-PRKAA1/2-SIRT1-PPARGC1A signaling pathway. Represses the expression of SERPINE1/PAI1, an important modulator of cardiovascular disease and the expression of inflammatory cytokines and chemokines in macrophages. Represses gene expression at a distance in macrophages by inhibiting the transcription of enhancer-derived RNAs (eRNAs). Plays a role in the circadian regulation of body temperature and negatively regulates thermogenic transcriptional programs in brown adipose tissue (BAT); imposes a circadian oscillation in BAT activity, increasing body temperature when awake and depressing thermogenesis during sleep. In concert with NR2E3, regulates transcriptional networks critical for photoreceptor development and function. In addition to its activity as a repressor, can also act as a transcriptional activator. In the ovarian granulosa cells acts as a transcriptional activator of STAR which plays a role in steroid biosynthesis. In collaboration with SP1, activates GJA1 transcription in a heme-independent manner. Represses the transcription of CYP2B10, CYP4A10 and CYP4A14. Represses the transcription of CES2. Represses and regulates the circadian expression of TSHB in a NCOR1-dependent manner. Negatively regulates the protein stability of NR3C1 and influences the time-dependent subcellular distribution of NR3C1, thereby affecting its transcriptional regulatory activity. Plays a critical role in the circadian control of neutrophilic inflammation in the lung; under resting, non-stress conditions, acts as a rhythmic repressor to limit inflammatory activity whereas in the presence of inflammatory triggers undergoes ubiquitin-mediated degradation thereby relieving inhibition of the inflammatory response. Plays a key role in the circadian regulation of microglial activation and neuroinflammation; suppresses microglial activation through the NF-kappaB pathway in the central nervous system. Plays a role in the regulation of the diurnal rhythms of lipid and protein metabolism in the skeletal muscle via transcriptional repression of genes controlling lipid and amino acid metabolism in the muscle. This Ovis aries (Sheep) protein is Nuclear receptor subfamily 1 group D member 1 (NR1D1).